A 465-amino-acid chain; its full sequence is 3-isopropylmalate dehydratase large subunit (465 aa).

Cys-347, Cys-407, and Cys-410 together coordinate [4Fe-4S] cluster. Residues 416 to 443 (DTLRPGERSASTSNRNFEGRQGPGGRTH) are disordered.

Belongs to the aconitase/IPM isomerase family. LeuC type 1 subfamily. In terms of assembly, heterodimer of LeuC and LeuD. It depends on [4Fe-4S] cluster as a cofactor.

The enzyme catalyses (2R,3S)-3-isopropylmalate = (2S)-2-isopropylmalate. The protein operates within amino-acid biosynthesis; L-leucine biosynthesis; L-leucine from 3-methyl-2-oxobutanoate: step 2/4. Its function is as follows. Catalyzes the isomerization between 2-isopropylmalate and 3-isopropylmalate, via the formation of 2-isopropylmaleate. This Frankia casuarinae (strain DSM 45818 / CECT 9043 / HFP020203 / CcI3) protein is 3-isopropylmalate dehydratase large subunit.